A 231-amino-acid polypeptide reads, in one-letter code: AA9 family lytic polysaccharide monooxygenase C (231 aa).

A signal peptide spans 1 to 18 (MKSGLLFTTASLALTASA). H19 is a binding site for Cu(2+). Cysteines 60 and 179 form a disulfide. Residues N69 and N143 are each glycosylated (N-linked (GlcNAc...) asparagine). H165 and Q174 together coordinate O2. Y176 lines the Cu(2+) pocket.

It belongs to the polysaccharide monooxygenase AA9 family. It depends on Cu(2+) as a cofactor.

Its subcellular location is the secreted. It catalyses the reaction [(1-&gt;4)-beta-D-glucosyl]n+m + reduced acceptor + O2 = 4-dehydro-beta-D-glucosyl-[(1-&gt;4)-beta-D-glucosyl]n-1 + [(1-&gt;4)-beta-D-glucosyl]m + acceptor + H2O.. Its function is as follows. Lytic polysaccharide monooxygenase (LPMO) that depolymerizes crystalline and amorphous polysaccharides via the oxidation of scissile alpha- or beta-(1-4)-glycosidic bonds, yielding C1 oxidation products. Catalysis by LPMOs requires the reduction of the active-site copper from Cu(II) to Cu(I) by a reducing agent and H(2)O(2) or O(2) as a cosubstrate. In Emericella nidulans (strain FGSC A4 / ATCC 38163 / CBS 112.46 / NRRL 194 / M139) (Aspergillus nidulans), this protein is AA9 family lytic polysaccharide monooxygenase C.